A 106-amino-acid polypeptide reads, in one-letter code: Thiosulfate sulfurtransferase GlpE (106 aa).

One can recognise a Rhodanese domain in the interval 17–105 (QLPSVCLADI…WRHVYPYTAT (89 aa)). Cys-65 (cysteine persulfide intermediate) is an active-site residue.

Belongs to the GlpE family.

Its subcellular location is the cytoplasm. The enzyme catalyses thiosulfate + hydrogen cyanide = thiocyanate + sulfite + 2 H(+). It carries out the reaction thiosulfate + [thioredoxin]-dithiol = [thioredoxin]-disulfide + hydrogen sulfide + sulfite + 2 H(+). Transferase that catalyzes the transfer of sulfur from thiosulfate to thiophilic acceptors such as cyanide or dithiols. May function in a CysM-independent thiosulfate assimilation pathway by catalyzing the conversion of thiosulfate to sulfite, which can then be used for L-cysteine biosynthesis. The polypeptide is Thiosulfate sulfurtransferase GlpE (Tolumonas auensis (strain DSM 9187 / NBRC 110442 / TA 4)).